The primary structure comprises 621 residues: Chaperone protein HscA homolog (621 aa).

Belongs to the heat shock protein 70 family.

Its function is as follows. Chaperone involved in the maturation of iron-sulfur cluster-containing proteins. Has a low intrinsic ATPase activity which is markedly stimulated by HscB. This is Chaperone protein HscA homolog from Pseudomonas fluorescens (strain Pf0-1).